A 470-amino-acid polypeptide reads, in one-letter code: Siroheme synthase (470 aa).

Residues 1-203 (MEFFPIFLKL…GDEAAARAEM (203 aa)) are precorrin-2 dehydrogenase /sirohydrochlorin ferrochelatase. NAD(+) contacts are provided by residues 22 to 23 (EV) and 43 to 44 (PE). S128 carries the post-translational modification Phosphoserine. Residues 216 to 470 (GAVYLVGAGP…ENSAVTIQED (255 aa)) are uroporphyrinogen-III C-methyltransferase. An S-adenosyl-L-methionine-binding site is contributed by P225. D248 acts as the Proton acceptor in catalysis. The active-site Proton donor is K270. S-adenosyl-L-methionine is bound by residues 301 to 303 (GGD), M383, and A412.

This sequence in the N-terminal section; belongs to the precorrin-2 dehydrogenase / sirohydrochlorin ferrochelatase family. It in the C-terminal section; belongs to the precorrin methyltransferase family.

It catalyses the reaction uroporphyrinogen III + 2 S-adenosyl-L-methionine = precorrin-2 + 2 S-adenosyl-L-homocysteine + H(+). It carries out the reaction precorrin-2 + NAD(+) = sirohydrochlorin + NADH + 2 H(+). The enzyme catalyses siroheme + 2 H(+) = sirohydrochlorin + Fe(2+). Its pathway is cofactor biosynthesis; adenosylcobalamin biosynthesis; precorrin-2 from uroporphyrinogen III: step 1/1. It participates in cofactor biosynthesis; adenosylcobalamin biosynthesis; sirohydrochlorin from precorrin-2: step 1/1. It functions in the pathway porphyrin-containing compound metabolism; siroheme biosynthesis; precorrin-2 from uroporphyrinogen III: step 1/1. The protein operates within porphyrin-containing compound metabolism; siroheme biosynthesis; siroheme from sirohydrochlorin: step 1/1. Its pathway is porphyrin-containing compound metabolism; siroheme biosynthesis; sirohydrochlorin from precorrin-2: step 1/1. Multifunctional enzyme that catalyzes the SAM-dependent methylations of uroporphyrinogen III at position C-2 and C-7 to form precorrin-2 via precorrin-1. Then it catalyzes the NAD-dependent ring dehydrogenation of precorrin-2 to yield sirohydrochlorin. Finally, it catalyzes the ferrochelation of sirohydrochlorin to yield siroheme. The polypeptide is Siroheme synthase (Chromobacterium violaceum (strain ATCC 12472 / DSM 30191 / JCM 1249 / CCUG 213 / NBRC 12614 / NCIMB 9131 / NCTC 9757 / MK)).